The sequence spans 391 residues: 3-ketoacyl-CoA thiolase (391 aa).

Cysteine 95 serves as the catalytic Acyl-thioester intermediate. Catalysis depends on proton acceptor residues histidine 347 and cysteine 377.

The protein belongs to the thiolase-like superfamily. Thiolase family. As to quaternary structure, heterotetramer of two alpha chains (FadB) and two beta chains (FadA).

Its subcellular location is the cytoplasm. The enzyme catalyses an acyl-CoA + acetyl-CoA = a 3-oxoacyl-CoA + CoA. It participates in lipid metabolism; fatty acid beta-oxidation. Functionally, catalyzes the final step of fatty acid oxidation in which acetyl-CoA is released and the CoA ester of a fatty acid two carbons shorter is formed. The chain is 3-ketoacyl-CoA thiolase from Pseudomonas syringae pv. tomato (strain ATCC BAA-871 / DC3000).